The following is a 73-amino-acid chain: Maltose-binding periplasmic protein (73 aa).

The first 30 residues, 1-30, serve as a signal peptide directing secretion; it reads MMTKTNLKMGARTLALSVLATLVLSASALA.

This sequence belongs to the bacterial solute-binding protein 1 family.

It localises to the periplasm. Involved in the high-affinity maltose membrane transport system. Initial receptor for the active transport of and chemotaxis toward maltooligosaccharides. This chain is Maltose-binding periplasmic protein (malE), found in Photorhabdus luminescens (Xenorhabdus luminescens).